Reading from the N-terminus, the 311-residue chain is Mediator of RNA polymerase II transcription subunit 27-A (311 aa).

This sequence belongs to the Mediator complex subunit 27 family. Component of the Mediator complex.

The protein resides in the nucleus. In terms of biological role, component of the Mediator complex, a coactivator involved in the regulated transcription of nearly all RNA polymerase II-dependent genes. Mediator functions as a bridge to convey information from gene-specific regulatory proteins to the basal RNA polymerase II transcription machinery. Mediator is recruited to promoters by direct interactions with regulatory proteins and serves as a scaffold for the assembly of a functional preinitiation complex with RNA polymerase II and the general transcription factors. The chain is Mediator of RNA polymerase II transcription subunit 27-A (med27-a) from Xenopus laevis (African clawed frog).